Here is a 196-residue protein sequence, read N- to C-terminus: Thymidylate kinase (196 aa).

7–14 (GIDGSGKT) contributes to the ATP binding site.

Belongs to the thymidylate kinase family.

The catalysed reaction is dTMP + ATP = dTDP + ADP. Functionally, phosphorylation of dTMP to form dTDP in both de novo and salvage pathways of dTTP synthesis. In Wolbachia pipientis wMel, this protein is Thymidylate kinase.